Here is a 396-residue protein sequence, read N- to C-terminus: L-lactate dehydrogenase (396 aa).

Residues 1–380 (MIISAASDYR…SGDSLVQELG (380 aa)) form the FMN hydroxy acid dehydrogenase domain. Tyrosine 24 is a binding site for substrate. FMN contacts are provided by serine 106 and glutamine 127. Residue tyrosine 129 coordinates substrate. Threonine 155 provides a ligand contact to FMN. Residue arginine 164 coordinates substrate. Lysine 251 is a binding site for FMN. Histidine 275 acts as the Proton acceptor in catalysis. Substrate is bound at residue arginine 278. FMN is bound at residue 306-330 (DSGIRNGLDVVRMIALGADTVLLGR).

The protein belongs to the FMN-dependent alpha-hydroxy acid dehydrogenase family. Requires FMN as cofactor.

It is found in the cell inner membrane. It catalyses the reaction (S)-lactate + A = pyruvate + AH2. Functionally, catalyzes the conversion of L-lactate to pyruvate. Is coupled to the respiratory chain. The polypeptide is L-lactate dehydrogenase (Salmonella arizonae (strain ATCC BAA-731 / CDC346-86 / RSK2980)).